Reading from the N-terminus, the 29-residue chain is Beta-theraphotoxin-Gr1b (29 aa).

3 disulfide bridges follow: Cys2–Cys16, Cys9–Cys21, and Cys15–Cys25. Leucine amide is present on Leu29.

This sequence belongs to the neurotoxin 30 (phrixotoxin) family. As to expression, expressed by the venom gland.

Its subcellular location is the secreted. Its function is as follows. Inhibits the voltage-gated sodium channels Nav1.1/SCN1A (IC(50)=360 nM), Nav1.2/SCN2A (IC(50)=600 nM), Nav1.3/SCN3A (IC(50)=1280), Nav1.4/SCN4A (IC(50)=330 nM), Nav1.6/SCN8A (IC(50)=1200 nM), Nav1.7/SCN9A (IC(50)=1-40 nM), and voltage-gated potassium channels Kv11.1/KCNH2 (IC(50)=4.8 uM). Induces analgesia in mammals. This analgesia is mediated by a non-opioid receptor related mechanism. The sequence is that of Beta-theraphotoxin-Gr1b from Grammostola rosea (Chilean rose tarantula).